We begin with the raw amino-acid sequence, 206 residues long: Small ribosomal subunit protein uS4 (206 aa).

Residues 98–155 form the S4 RNA-binding domain; sequence TRLDNVVYRLGWALSRAQARQIVSHGKIAVNGKRVNIPSYNLKPGDVVELLDKDLIPV.

Belongs to the universal ribosomal protein uS4 family. As to quaternary structure, part of the 30S ribosomal subunit. Contacts protein S5. The interaction surface between S4 and S5 is involved in control of translational fidelity.

One of the primary rRNA binding proteins, it binds directly to 16S rRNA where it nucleates assembly of the body of the 30S subunit. Its function is as follows. With S5 and S12 plays an important role in translational accuracy. The protein is Small ribosomal subunit protein uS4 of Dictyoglomus turgidum (strain DSM 6724 / Z-1310).